The chain runs to 116 residues: Nitrogen regulatory PII-like protein (116 aa).

The protein belongs to the P(II) protein family. In terms of assembly, needs to interact with NrgA in order to localize correctly to the membrane.

The protein localises to the cell membrane. Functionally, required for full induction of the nrgAB operon under conditions of ammonium limitation. The sequence is that of Nitrogen regulatory PII-like protein (nrgB) from Bacillus subtilis (strain 168).